The chain runs to 276 residues: Large ribosomal subunit protein uL2 (276 aa).

The disordered stretch occupies residues Met-226–Gly-276.

Belongs to the universal ribosomal protein uL2 family. In terms of assembly, part of the 50S ribosomal subunit. Forms a bridge to the 30S subunit in the 70S ribosome.

In terms of biological role, one of the primary rRNA binding proteins. Required for association of the 30S and 50S subunits to form the 70S ribosome, for tRNA binding and peptide bond formation. It has been suggested to have peptidyltransferase activity; this is somewhat controversial. Makes several contacts with the 16S rRNA in the 70S ribosome. The chain is Large ribosomal subunit protein uL2 from Vesicomyosocius okutanii subsp. Calyptogena okutanii (strain HA).